Here is a 473-residue protein sequence, read N- to C-terminus: Anthocyanidin 5,3-O-glucosyltransferase (473 aa).

It belongs to the UDP-glycosyltransferase family.

The protein operates within pigment biosynthesis; anthocyanin biosynthesis. Sequentially catalyzes two glycosylation steps at the 5-OH and 3-OH positions of anthocyanidin. Unglycosylated anthocyanidin or anthocyanidin 5-O-glucoside, but not anthocyanidin 3-O-glucoside, can be used as glucosyl acceptor. The protein is Anthocyanidin 5,3-O-glucosyltransferase (RhGT1) of Rosa hybrid cultivar.